Here is a 196-residue protein sequence, read N- to C-terminus: DnaA initiator-associating protein DiaA (196 aa).

The SIS domain maps to 34 to 196 (LVQSLLNGNK…DNTLFPHQDD (163 aa)).

The protein belongs to the SIS family. DiaA subfamily. Homotetramer; dimer of dimers.

Functionally, required for the timely initiation of chromosomal replication via direct interactions with the DnaA initiator protein. This Yersinia enterocolitica serotype O:8 / biotype 1B (strain NCTC 13174 / 8081) protein is DnaA initiator-associating protein DiaA.